A 616-amino-acid polypeptide reads, in one-letter code: Dihydroxy-acid dehydratase (616 aa).

D81 provides a ligand contact to Mg(2+). C122 contacts [2Fe-2S] cluster. Residues D123 and K124 each coordinate Mg(2+). K124 is modified (N6-carboxylysine). C195 serves as a coordination point for [2Fe-2S] cluster. Position 491 (E491) interacts with Mg(2+). S517 (proton acceptor) is an active-site residue.

This sequence belongs to the IlvD/Edd family. As to quaternary structure, homodimer. [2Fe-2S] cluster is required as a cofactor. It depends on Mg(2+) as a cofactor.

The catalysed reaction is (2R)-2,3-dihydroxy-3-methylbutanoate = 3-methyl-2-oxobutanoate + H2O. It catalyses the reaction (2R,3R)-2,3-dihydroxy-3-methylpentanoate = (S)-3-methyl-2-oxopentanoate + H2O. It functions in the pathway amino-acid biosynthesis; L-isoleucine biosynthesis; L-isoleucine from 2-oxobutanoate: step 3/4. Its pathway is amino-acid biosynthesis; L-valine biosynthesis; L-valine from pyruvate: step 3/4. In terms of biological role, functions in the biosynthesis of branched-chain amino acids. Catalyzes the dehydration of (2R,3R)-2,3-dihydroxy-3-methylpentanoate (2,3-dihydroxy-3-methylvalerate) into 2-oxo-3-methylpentanoate (2-oxo-3-methylvalerate) and of (2R)-2,3-dihydroxy-3-methylbutanoate (2,3-dihydroxyisovalerate) into 2-oxo-3-methylbutanoate (2-oxoisovalerate), the penultimate precursor to L-isoleucine and L-valine, respectively. This chain is Dihydroxy-acid dehydratase, found in Salmonella paratyphi C (strain RKS4594).